Reading from the N-terminus, the 386-residue chain is 8-amino-7-oxononanoate synthase (386 aa).

The substrate site is built by R22 and R29. 109–110 (GY) contributes to the pyridoxal 5'-phosphate binding site. Substrate is bound at residue H134. Residues S182, 207–210 (DDAH), and 237–240 (TLSK) each bind pyridoxal 5'-phosphate. Residue K240 is modified to N6-(pyridoxal phosphate)lysine. T349 contacts substrate.

It belongs to the class-II pyridoxal-phosphate-dependent aminotransferase family. BioF subfamily. As to quaternary structure, homodimer. Requires pyridoxal 5'-phosphate as cofactor.

It carries out the reaction 6-carboxyhexanoyl-[ACP] + L-alanine + H(+) = (8S)-8-amino-7-oxononanoate + holo-[ACP] + CO2. The protein operates within cofactor biosynthesis; biotin biosynthesis. In terms of biological role, catalyzes the decarboxylative condensation of pimeloyl-[acyl-carrier protein] and L-alanine to produce 8-amino-7-oxononanoate (AON), [acyl-carrier protein], and carbon dioxide. This chain is 8-amino-7-oxononanoate synthase, found in Beijerinckia indica subsp. indica (strain ATCC 9039 / DSM 1715 / NCIMB 8712).